A 91-amino-acid polypeptide reads, in one-letter code: uncharacterized protein (91 aa).

A helical membrane pass occupies residues 50–70; sequence FGFFGGPFIGGLAGGLIGSAL.

The protein resides in the cell membrane. This is an uncharacterized protein from Bacillus subtilis (strain 168).